Here is a 187-residue protein sequence, read N- to C-terminus: Protein dj-1beta (187 aa).

Cysteine sulfinic acid (-SO2H) is present on cysteine 45. Catalysis depends on cysteine 104, which acts as the Nucleophile. Cysteine 104 carries the cysteine sulfinic acid (-SO2H); alternate modification.

Post-translationally, oxidation of Cys-45 and Cys-104 in response to oxidative stress. Levels of oxidation increase with age. In terms of tissue distribution, expressed in the head and testis (at protein level). Ubiquitously expressed at constant levels.

Its subcellular location is the mitochondrion. The protein resides in the cytoplasm. It is found in the nucleus. Plays an important role in cell protection against oxidative stress and cell death by acting as a oxidative stress sensor. Does not play a role in methylglyoxal detoxification. Plays a role in mitochondrial function together with Pink1. In motor neurons regulates structural synaptic plasticity of locomotor behavior as part of the PTEN-phosphatidylinositol 3-kinase pathway in response to oxygen species (ROS) levels. This is Protein dj-1beta from Drosophila melanogaster (Fruit fly).